We begin with the raw amino-acid sequence, 179 residues long: Shikimate kinase (179 aa).

15 to 20 (GAGKTS) contacts ATP. Residue T19 coordinates Mg(2+). Residues D37, R61, and G83 each contribute to the substrate site. R123 provides a ligand contact to ATP. Position 142 (R142) interacts with substrate.

It belongs to the shikimate kinase family. In terms of assembly, monomer. Mg(2+) is required as a cofactor.

The protein localises to the cytoplasm. It catalyses the reaction shikimate + ATP = 3-phosphoshikimate + ADP + H(+). It participates in metabolic intermediate biosynthesis; chorismate biosynthesis; chorismate from D-erythrose 4-phosphate and phosphoenolpyruvate: step 5/7. Its function is as follows. Catalyzes the specific phosphorylation of the 3-hydroxyl group of shikimic acid using ATP as a cosubstrate. The chain is Shikimate kinase from Coxiella burnetii (strain CbuG_Q212) (Coxiella burnetii (strain Q212)).